A 284-amino-acid polypeptide reads, in one-letter code: Acetyl-coenzyme A carboxylase carboxyl transferase subunit beta (284 aa).

The region spanning 25–284 is the CoA carboxyltransferase N-terminal domain; that stretch reads LWVKCPETGA…LCKILTKSVQ (260 aa).

Belongs to the AccD/PCCB family. In terms of assembly, acetyl-CoA carboxylase is a heterohexamer composed of biotin carboxyl carrier protein (AccB), biotin carboxylase (AccC) and two subunits each of ACCase subunit alpha (AccA) and ACCase subunit beta (AccD).

The protein resides in the cytoplasm. It carries out the reaction N(6)-carboxybiotinyl-L-lysyl-[protein] + acetyl-CoA = N(6)-biotinyl-L-lysyl-[protein] + malonyl-CoA. It functions in the pathway lipid metabolism; malonyl-CoA biosynthesis; malonyl-CoA from acetyl-CoA: step 1/1. In terms of biological role, component of the acetyl coenzyme A carboxylase (ACC) complex. Biotin carboxylase (BC) catalyzes the carboxylation of biotin on its carrier protein (BCCP) and then the CO(2) group is transferred by the transcarboxylase to acetyl-CoA to form malonyl-CoA. This Liberibacter asiaticus (strain psy62) protein is Acetyl-coenzyme A carboxylase carboxyl transferase subunit beta.